Reading from the N-terminus, the 271-residue chain is Ubiquitin thioesterase OTUB1 (271 aa).

Residue alanine 2 is modified to N-acetylalanine. Residue serine 16 is modified to Phosphoserine. Residue tyrosine 26 is modified to Phosphotyrosine; by SRC. Residues 80–271 enclose the OTU domain; the sequence is SYIRKTRPDG…RPGHYDILYK (192 aa). Residue aspartate 88 is part of the active site. Cysteine 91 functions as the Nucleophile in the catalytic mechanism. Ubiquitin-conjugating enzyme E2 binding stretches follow at residues 130–138 and 169–177; these read FTEFTIEDF and DYLVVYLRL. The tract at residues 189–195 is free ubiquitin binding; that stretch reads FFEHFIE. A ubiquitin-conjugating enzyme E2 binding region spans residues 206-213; that stretch reads QEVEPMCK. Free ubiquitin binding stretches follow at residues 214 to 221 and 245 to 251; these read ESDHIHII and NPHIFPE. Histidine 265 is a catalytic residue.

The protein belongs to the peptidase C65 family. Interacts with FUS and RACK1. Interacts with UBE2D1/UBCH5A, UBE2W/UBC16 and UBE2N/UBC13. In terms of assembly, interacts with RNF128. Forms a ternary complex with RNF128 and USP8. Interacts with the C-terminal UCH catalytic domain of USP8. As to quaternary structure, interacts with RNF128. Does not associate with USP8. Post-translationally, phosphorylation at Tyr-26 by SRC and SRMS promotes deubiquitination of RPTOR via a non-catalytic process. As to expression, isoform 1 is ubiquitous. Isoform 2 is expressed only in lymphoid tissues such as tonsils, lymph nodes and spleen, as well as peripheral blood mononuclear cells.

The protein resides in the cytoplasm. The catalysed reaction is Thiol-dependent hydrolysis of ester, thioester, amide, peptide and isopeptide bonds formed by the C-terminal Gly of ubiquitin (a 76-residue protein attached to proteins as an intracellular targeting signal).. With respect to regulation, by free ubiquitin: binding of free ubiquitin triggers conformational changes in the OTU domain and formation of a ubiquitin-binding helix in the N-terminus, promoting binding of the conjugated donor ubiquitin in UBE2N/UBC13 to OTUB1. In terms of biological role, hydrolase that can specifically remove 'Lys-48'-linked conjugated ubiquitin from proteins and plays an important regulatory role at the level of protein turnover by preventing degradation. Regulator of T-cell anergy, a phenomenon that occurs when T-cells are rendered unresponsive to antigen rechallenge and no longer respond to their cognate antigen. Acts via its interaction with RNF128/GRAIL, a crucial inductor of CD4 T-cell anergy. Isoform 1 destabilizes RNF128, leading to prevent anergy. In contrast, isoform 2 stabilizes RNF128 and promotes anergy. Surprisingly, it regulates RNF128-mediated ubiquitination, but does not deubiquitinate polyubiquitinated RNF128. Deubiquitinates estrogen receptor alpha (ESR1). Mediates deubiquitination of 'Lys-48'-linked polyubiquitin chains, but not 'Lys-63'-linked polyubiquitin chains. Not able to cleave di-ubiquitin. Also capable of removing NEDD8 from NEDD8 conjugates, but with a much lower preference compared to 'Lys-48'-linked ubiquitin. Its function is as follows. Plays a key non-catalytic role in DNA repair regulation by inhibiting activity of RNF168, an E3 ubiquitin-protein ligase that promotes accumulation of 'Lys-63'-linked histone H2A and H2AX at DNA damage sites. Inhibits RNF168 independently of ubiquitin thioesterase activity by binding and inhibiting UBE2N/UBC13, the E2 partner of RNF168, thereby limiting spreading of 'Lys-63'-linked histone H2A and H2AX marks. Inhibition occurs by binding to free ubiquitin: free ubiquitin acts as an allosteric regulator that increases affinity for UBE2N/UBC13 and disrupts interaction with UBE2V1. The OTUB1-UBE2N/UBC13-free ubiquitin complex adopts a configuration that mimics a cleaved 'Lys48'-linked di-ubiquitin chain. Acts as a regulator of mTORC1 and mTORC2 complexes. When phosphorylated at Tyr-26, acts as an activator of the mTORC1 complex by mediating deubiquitination of RPTOR via a non-catalytic process: acts by binding and inhibiting the activity of the ubiquitin-conjugating enzyme E2 (UBE2D1/UBCH5A, UBE2W/UBC16 and UBE2N/UBC13), thereby preventing ubiquitination of RPTOR. Can also act as an inhibitor of the mTORC1 and mTORC2 complexes in response to amino acids by mediating non-catalytic deubiquitination of DEPTOR. The sequence is that of Ubiquitin thioesterase OTUB1 (OTUB1) from Homo sapiens (Human).